The primary structure comprises 218 residues: Glutathione S-transferase class-mu 26 kDa isozyme (218 aa).

The GST N-terminal domain maps to Ser-2 to Gly-83. Glutathione is bound by residues Tyr-7–Trp-8, Trp-41–Lys-45, Asn-54–Leu-55, and Gln-67–Ser-68. The 119-residue stretch at Cys-85–Leu-203 folds into the GST C-terminal domain. Position 111 (Tyr-111) interacts with substrate.

The protein belongs to the GST superfamily. Mu family. In terms of assembly, homodimer.

It carries out the reaction RX + glutathione = an S-substituted glutathione + a halide anion + H(+). Functionally, conjugation of reduced glutathione to a wide number of exogenous and endogenous hydrophobic electrophiles. Its function is as follows. GST isoenzymes appear to play a central role in the parasite detoxification system. Other functions are also suspected including a role in increasing the solubility of haematin in the parasite gut. The protein is Glutathione S-transferase class-mu 26 kDa isozyme of Schistosoma japonicum (Blood fluke).